The sequence spans 124 residues: Small ribosomal subunit protein uS13 (124 aa).

Residues 95-124 are disordered; it reads GLPVRGQRTKTNARTRKGPKRTVAGKKKAR.

It belongs to the universal ribosomal protein uS13 family. In terms of assembly, part of the 30S ribosomal subunit. Forms a loose heterodimer with protein S19. Forms two bridges to the 50S subunit in the 70S ribosome.

Its function is as follows. Located at the top of the head of the 30S subunit, it contacts several helices of the 16S rRNA. In the 70S ribosome it contacts the 23S rRNA (bridge B1a) and protein L5 of the 50S subunit (bridge B1b), connecting the 2 subunits; these bridges are implicated in subunit movement. Contacts the tRNAs in the A and P-sites. The polypeptide is Small ribosomal subunit protein uS13 (Leifsonia xyli subsp. xyli (strain CTCB07)).